The primary structure comprises 256 residues: 3-hydroxy-5-phosphonooxypentane-2,4-dione thiolase (256 aa).

Lysine 168 (schiff-base intermediate with substrate) is an active-site residue.

This sequence belongs to the DeoC/FbaB aldolase family. As to quaternary structure, homodecamer.

Its subcellular location is the cytoplasm. It catalyses the reaction dihydroxyacetone phosphate + acetyl-CoA = 3-hydroxy-2,4-dioxopentyl phosphate + CoA. Involved in the degradation of phospho-AI-2, thereby terminating induction of the lsr operon and closing the AI-2 signaling cycle. Catalyzes the transfer of an acetyl moiety from 3-hydroxy-5-phosphonooxypentane-2,4-dione to CoA to form glycerone phosphate and acetyl-CoA. The polypeptide is 3-hydroxy-5-phosphonooxypentane-2,4-dione thiolase (lsrF) (Shigella flexneri).